A 689-amino-acid chain; its full sequence is Histone-lysine N-methyltransferase MEDEA (689 aa).

Disordered stretches follow at residues 1 to 20 (MEKENHEDDGEGLPPELNQI), 51 to 73 (HQSFDLNQPAAEDDNGGDNKSLL), and 169 to 188 (ELSSEEDEEDEEEDEEEIKK). The tract at residues 1-109 (MEKENHEDDG…DEDQDYALEE (109 aa)) is interaction with FIE. The segment covering 171–184 (SSEEDEEDEEEDEE) has biased composition (acidic residues). An SANT domain is found at 339-389 (NNTMWTPVEKDLYLKGIEIFGRNSCDVALNILRGLKTCLEIYNYMREQDQC). The region spanning 428-532 (RYPPALKKTT…TLGETPVQIQ (105 aa)) is the CXC domain. One can recognise an SET domain in the interval 544 to 659 (KKILIGKSDV…EGEELFFDYC (116 aa)). A disordered region spans residues 666–689 (DWSRGREPRKTGASKRSKEARPAR).

It belongs to the class V-like SAM-binding methyltransferase superfamily. Histone-lysine methyltransferase family. EZ subfamily. Interacts directly with FIE via its N-terminal domain. These two proteins are probably indirectly associated with FIS2. In plants, PcG complexes are probably composed of a member of the EZ family (CLF or MEA), FIE, and a member of the VEFS family (FIS2, VRN2 or EMF2). Interacts with TAF13. As to expression, expressed in unpollinated siliques that contain maturing gametophytes. Not expressed at early stages of floral development during early megagametogenesis.

Its subcellular location is the nucleus. It catalyses the reaction L-lysyl(27)-[histone H3] + 3 S-adenosyl-L-methionine = N(6),N(6),N(6)-trimethyl-L-lysyl(27)-[histone H3] + 3 S-adenosyl-L-homocysteine + 3 H(+). In terms of biological role, polycomb group (PcG) protein. Catalytic subunit of some PcG multiprotein complex, which methylates 'Lys-27' of histone H3, leading to transcriptional repression of the affected target genes. Required to prevent the proliferation of the central cell of the female gametophyte by repressing target genes before fertilization. After fertilization, it probably also regulates the embryo and endosperm proliferation and anteroposterior organization during seed development. PcG proteins act by forming multiprotein complexes, which are required to maintain the transcriptionally repressive state of homeotic genes throughout development. PcG proteins are not required to initiate repression, but to maintain it during later stages of development. Interacts with the promoter and repress the transcription of genes such as PHE1 and PHE2, that are paternally active and maternally silenced genes. The polypeptide is Histone-lysine N-methyltransferase MEDEA (MEA) (Arabidopsis thaliana (Mouse-ear cress)).